The following is a 216-amino-acid chain: Probable nicotinate-nucleotide adenylyltransferase (216 aa).

This sequence belongs to the NadD family.

The catalysed reaction is nicotinate beta-D-ribonucleotide + ATP + H(+) = deamido-NAD(+) + diphosphate. It participates in cofactor biosynthesis; NAD(+) biosynthesis; deamido-NAD(+) from nicotinate D-ribonucleotide: step 1/1. Its function is as follows. Catalyzes the reversible adenylation of nicotinate mononucleotide (NaMN) to nicotinic acid adenine dinucleotide (NaAD). The chain is Probable nicotinate-nucleotide adenylyltransferase from Klebsiella pneumoniae subsp. pneumoniae (strain ATCC 700721 / MGH 78578).